Reading from the N-terminus, the 275-residue chain is 5'-nucleotidase SurE (275 aa).

Positions 14, 15, 46, and 104 each coordinate a divalent metal cation.

Belongs to the SurE nucleotidase family. Requires a divalent metal cation as cofactor.

It is found in the cytoplasm. The catalysed reaction is a ribonucleoside 5'-phosphate + H2O = a ribonucleoside + phosphate. In terms of biological role, nucleotidase that shows phosphatase activity on nucleoside 5'-monophosphates. The chain is 5'-nucleotidase SurE from Synechocystis sp. (strain ATCC 27184 / PCC 6803 / Kazusa).